The primary structure comprises 153 residues: Large ribosomal subunit protein uL30 (153 aa).

The protein belongs to the universal ribosomal protein uL30 family. As to quaternary structure, part of the 50S ribosomal subunit.

This chain is Large ribosomal subunit protein uL30, found in Methanospirillum hungatei JF-1 (strain ATCC 27890 / DSM 864 / NBRC 100397 / JF-1).